The sequence spans 373 residues: Glutamine synthetase (373 aa).

An N-acetylalanine modification is found at Ala-2. Positions 2–25 (ATSASSHLNKGIKQVYMSLPQGEK) are required for glutamine-induced ubiquitination by CRL4(CRBN) and proteasomal degradation. N6-acetyllysine is present on residues Lys-11 and Lys-14. A GS beta-grasp domain is found at 24 to 106 (EKVQAMYIWI…VFCEVFKYNR (83 aa)). Tyr-104 carries the phosphotyrosine modification. In terms of domain architecture, GS catalytic spans 113–373 (LRHTCKRIMD…TGDEPFQYKN (261 aa)). Residue Glu-134 coordinates ATP. 4 residues coordinate Mn(2+): Glu-134, Glu-136, Glu-196, and Glu-203. 203 to 208 (EFQIGP) lines the ATP pocket. Residue 246 to 247 (NW) participates in L-glutamate binding. His-253 contributes to the Mn(2+) binding site. ATP is bound by residues 255–257 (NFS), Arg-319, and Arg-324. Position 319 (Arg-319) interacts with L-glutamate. 336 to 338 (YFE) lines the ADP pocket. Mn(2+) is bound at residue Glu-338. Arg-340 contributes to the L-glutamate binding site. A Phosphoserine modification is found at Ser-343.

This sequence belongs to the glutamine synthetase family. As to quaternary structure, decamer; composed of two pentamers. Interacts with PALMD. Interacts with RHOJ. Interacts with BEST2; this interaction tethers a fraction of GLUL to the membrane, causing a decrease of cytosolic glutamine synthase (GS) activity and inhibits the chloride channel activity of BEST2 by affecting the gating at the aperture in the absence of intracellular glutamate. It depends on Mg(2+) as a cofactor. Mn(2+) serves as cofactor. In terms of processing, palmitoylated; undergoes autopalmitoylation. Post-translationally, acetylated by EP300/p300; acetylation is stimulated by increased glutamine levels and promotes ubiquitin-mediated proteasomal degradation. Ubiquitinated by ZNRF1. Ubiquitinated by the DCX (DDB1-CUL4-X-box) E3 ubiquitin-protein ligase complex called CRL4(CRBN), leading to proteasomal degradation.

It localises to the cytoplasm. It is found in the cytosol. The protein resides in the microsome. The protein localises to the mitochondrion. Its subcellular location is the cell membrane. The enzyme catalyses L-glutamate + NH4(+) + ATP = L-glutamine + ADP + phosphate + H(+). It carries out the reaction L-cysteinyl-[protein] + hexadecanoyl-CoA = S-hexadecanoyl-L-cysteinyl-[protein] + CoA. Its activity is regulated as follows. Glutamine synthetase activity is inhibited by methionine sulfoximine (MSO). In terms of biological role, glutamine synthetase that catalyzes the ATP-dependent conversion of glutamate and ammonia to glutamine. Its role depends on tissue localization: in the brain, it regulates the levels of toxic ammonia and converts neurotoxic glutamate to harmless glutamine, whereas in the liver, it is one of the enzymes responsible for the removal of ammonia. Plays a key role in ammonium detoxification during erythropoiesis: the glutamine synthetase activity is required to remove ammonium generated by porphobilinogen deaminase (HMBS) during heme biosynthesis to prevent ammonium accumulation and oxidative stress. Essential for proliferation of fetal skin fibroblasts. Independently of its glutamine synthetase activity, required for endothelial cell migration during vascular development. Involved in angiogenesis by regulating membrane localization and activation of the GTPase RHOJ, possibly by promoting RHOJ palmitoylation. May act as a palmitoyltransferase for RHOJ: able to autopalmitoylate and then transfer the palmitoyl group to RHOJ. Plays a role in ribosomal 40S subunit biogenesis. Through the interaction with BEST2, inhibits BEST2 channel activity by affecting the gating at the aperture in the absence of intracellular L-glutamate, but sensitizes BEST2 to intracellular L-glutamate, which promotes the opening of BEST2 and thus relieves its inhibitory effect on BEST2. The chain is Glutamine synthetase from Sus scrofa (Pig).